A 332-amino-acid polypeptide reads, in one-letter code: Glycerol-3-phosphate dehydrogenase [NAD(P)+] (332 aa).

Residues Ser-11, Phe-12, Lys-32, and Lys-106 each contribute to the NADPH site. Lys-106, Gly-137, and Ser-139 together coordinate sn-glycerol 3-phosphate. Ala-141 is a binding site for NADPH. Residues Lys-192, Asp-245, Ser-255, Arg-256, and Asn-257 each coordinate sn-glycerol 3-phosphate. Lys-192 functions as the Proton acceptor in the catalytic mechanism. Position 256 (Arg-256) interacts with NADPH. Val-280 and Glu-282 together coordinate NADPH.

Belongs to the NAD-dependent glycerol-3-phosphate dehydrogenase family.

Its subcellular location is the cytoplasm. It carries out the reaction sn-glycerol 3-phosphate + NAD(+) = dihydroxyacetone phosphate + NADH + H(+). The enzyme catalyses sn-glycerol 3-phosphate + NADP(+) = dihydroxyacetone phosphate + NADPH + H(+). The protein operates within membrane lipid metabolism; glycerophospholipid metabolism. In terms of biological role, catalyzes the reduction of the glycolytic intermediate dihydroxyacetone phosphate (DHAP) to sn-glycerol 3-phosphate (G3P), the key precursor for phospholipid synthesis. This is Glycerol-3-phosphate dehydrogenase [NAD(P)+] from Staphylococcus saprophyticus subsp. saprophyticus (strain ATCC 15305 / DSM 20229 / NCIMB 8711 / NCTC 7292 / S-41).